The following is a 241-amino-acid chain: Ribose-5-phosphate isomerase A (241 aa).

Substrate contacts are provided by residues 28-31 (TGST), 83-86 (DGAD), and 96-99 (KGGG). Catalysis depends on E105, which acts as the Proton acceptor. K123 lines the substrate pocket.

It belongs to the ribose 5-phosphate isomerase family. Homodimer.

It carries out the reaction aldehydo-D-ribose 5-phosphate = D-ribulose 5-phosphate. It functions in the pathway carbohydrate degradation; pentose phosphate pathway; D-ribose 5-phosphate from D-ribulose 5-phosphate (non-oxidative stage): step 1/1. Its function is as follows. Catalyzes the reversible conversion of ribose-5-phosphate to ribulose 5-phosphate. The protein is Ribose-5-phosphate isomerase A of Bradyrhizobium diazoefficiens (strain JCM 10833 / BCRC 13528 / IAM 13628 / NBRC 14792 / USDA 110).